We begin with the raw amino-acid sequence, 422 residues long: Nuclear hormone receptor family member nhr-54 (422 aa).

A DNA-binding region (nuclear receptor) is located at residues 14–92; the sequence is SVKCAICYKA…LGMTTENVRT (79 aa). 2 consecutive NR C4-type zinc fingers follow at residues 17–37 and 53–80; these read CAIC…CRAC and CTRK…FKKC. The 262-residue stretch at 161-422 folds into the NR LBD domain; it reads PDDDVIVELN…VFTEPEFFRV (262 aa).

It belongs to the nuclear hormone receptor family.

The protein resides in the nucleus. In terms of biological role, orphan nuclear receptor. The polypeptide is Nuclear hormone receptor family member nhr-54 (nhr-54) (Caenorhabditis elegans).